A 427-amino-acid polypeptide reads, in one-letter code: 12-alpha,13-alpha-dihydroxyfumitremorgin C prenyltransferase (427 aa).

A substrate-binding site is contributed by E94. Residues R105, K192, Y194, Y268, Q353, Y355, Y419, and Y423 each coordinate dimethylallyl diphosphate.

This sequence belongs to the tryptophan dimethylallyltransferase family.

The catalysed reaction is 12alpha,13alpha-dihydroxyfumitremorgin C + dimethylallyl diphosphate = fumitremorgin B + diphosphate. Its pathway is mycotoxin biosynthesis. Its function is as follows. 12-alpha,13-alpha-dihydroxyfumitremorgin C prenyltransferase; part of the gene cluster that mediates the biosynthesis of fumitremorgins, indole alkaloids that carry not only intriguing chemical structures, but also interesting biological and pharmacological activities. The biosynthesis of fumitremorgin-type alkaloids begins by condensation of the two amino acids L-tryptophan and L-proline to brevianamide F, catalyzed by the non-ribosomal peptide synthetase ftmA. Brevianamide F is then prenylated by the prenyltransferase ftmPT1/ftmB in the presence of dimethylallyl diphosphate, resulting in the formation of tryprostatin B. The three cytochrome P450 monooxygenases, ftmP450-1/ftmC, ftmP450-2/ftmE and ftmP450-3/FtmG, are responsible for the conversion of tryprostatin B to 6-hydroxytryprostatin B, tryprostatin A to fumitremorgin C and fumitremorgin C to 12,13-dihydroxyfumitremorgin C, respectively. The putative methyltransferase ftmMT/ftmD is expected for the conversion of 6-hydroxytryprostatin B to tryprostatin A. FtmPT2/FtmH catalyzes the prenylation of 12,13-dihydroxyfumitre-morgin C in the presence of dimethylallyl diphosphate, resulting in the formation of fumitremorgin B. Fumitremorgin B is further converted to verruculogen by ftmOx1/ftmF via the insertion of an endoperoxide bond between the two prenyl moieties. In some fungal species, verruculogen is further converted to fumitremorgin A, but the enzymes involved in this step have not been identified yet. The chain is 12-alpha,13-alpha-dihydroxyfumitremorgin C prenyltransferase from Aspergillus fumigatus (Neosartorya fumigata).